Consider the following 64-residue polypeptide: Large ribosomal subunit protein bL35 (64 aa).

It belongs to the bacterial ribosomal protein bL35 family.

This chain is Large ribosomal subunit protein bL35, found in Clavibacter michiganensis subsp. michiganensis (strain NCPPB 382).